A 175-amino-acid polypeptide reads, in one-letter code: Regenerating islet-derived protein 3-alpha (175 aa).

The first 26 residues, 1–26, serve as a signal peptide directing secretion; that stretch reads MLPPMALPSVSWMLLSCLMLLSQVQG. A propeptide spanning residues 27–37 is cleaved from the precursor; the sequence is EEPQRELPSAR. 3 cysteine pairs are disulfide-bonded: cysteine 40–cysteine 51, cysteine 68–cysteine 171, and cysteine 146–cysteine 163. The C-type lectin domain occupies 47-172; sequence YGSHCYALFL…CNVRLPYVCK (126 aa). Residues histidine 50 and histidine 107 each coordinate Zn(2+). The interval 103 to 118 is sufficient to activate EXTL3; that stretch reads WIGLHDPTQGTEPNGE. The EPN motif lies at 114–116; sequence EPN. Residues glutamate 121 and histidine 145 each contribute to the Zn(2+) site.

As to quaternary structure, forms a hexameric membrane-permeabilizing oligomeric pore on membrane phospholipids. The hexamer is formed by three dimers related by helical symmetry. Forms filaments, filamentation traps pore complexes and limits damage to host cells. Interacts with EXTL3. Proteolytic processing by trypsin removes an inhibitory N-terminal propeptide and is essential for peptidoglycan binding and antibacterial activity. In terms of tissue distribution, expressed by keratinocytes. Highly expressed in epidermal keratinocytes of psoriasis patients (at protein level). Constitutively expressed in intestine. Low expression is found in healthy pancreas. Overexpressed during the acute phase of pancreatitis and in some patients with chronic pancreatitis.

Its subcellular location is the secreted. Its activity is regulated as follows. Lipopolysaccharide inhibits pore-forming activity, explaining why is bactericidal for Gram-positive but not Gram-negative bacteria. In terms of biological role, bactericidal C-type lectin which acts exclusively against Gram-positive bacteria and mediates bacterial killing by binding to surface-exposed carbohydrate moieties of peptidoglycan. Binds membrane phospholipids and kills bacteria by forming a hexameric membrane-permeabilizing oligomeric pore. Acts as a hormone in response to different stimuli like anti-inflammatory signals, such as IL17A, or gut microbiome. Secreted by different cell types to activate its receptor EXTL3 and induce cell specific signaling pathways. Induced by IL17A in keratinocytes, regulates keratinocyte proliferation and differentiation after skin injury via activation of EXTL3-PI3K-AKT signaling pathway. In parallel, inhibits skin inflammation through the inhibition of inflammatory cytokines such as IL6 and TNF. In pancreas, is able to permealize beta-cells membrane and stimulate their proliferation. Functionally, has bacteriostatic activity. The chain is Regenerating islet-derived protein 3-alpha from Homo sapiens (Human).